Consider the following 1023-residue polypeptide: Sodium/potassium-transporting ATPase subunit alpha-1 (1023 aa).

The propeptide occupies Met-1–Val-5. A compositionally biased stretch (basic and acidic residues) spans Met-1–Glu-11. The disordered stretch occupies residues Met-1 to Glu-38. Residues Gly-6 to Pro-87 lie on the Cytoplasmic side of the membrane. Lys-9 carries the post-translational modification N6-acetyllysine. Residue Tyr-10 is modified to Phosphotyrosine. A Phosphoserine; by PKC modification is found at Ser-16. Lys-21 carries the post-translational modification N6-acetyllysine. Ser-23 bears the Phosphoserine; by PKC mark. A compositionally biased stretch (basic and acidic residues) spans Lys-28–Glu-38. Ser-40 and Ser-47 each carry phosphoserine. The tract at residues Pro-82–Pro-84 is phosphoinositide-3 kinase binding. Residues Glu-88 to Ala-108 form a helical membrane-spanning segment. The Extracellular segment spans residues Ile-109–Tyr-131. The chain crosses the membrane as a helical span at residues Leu-132–Ala-152. The Cytoplasmic portion of the chain corresponds to Lys-153–Ile-288. Positions Ser-216–Asn-235 are disordered. The residue at position 228 (Ser-228) is a Phosphoserine. Position 260 is a phosphotyrosine (Tyr-260). A helical membrane pass occupies residues Glu-289 to Ile-308. Topologically, residues Leu-309 to Ala-320 are extracellular. A helical transmembrane segment spans residues Val-321–Ala-338. The Cytoplasmic portion of the chain corresponds to Thr-339–Leu-772. Asp-376 serves as the catalytic 4-aspartylphosphate intermediate. Residues Ser-452 and Ser-484 each carry the phosphoserine modification. Lys-487 serves as a coordination point for ATP. Tyr-542 carries the post-translational modification Phosphotyrosine. Positions Arg-596–Asp-717 are mediates interaction with SCN7A. Residue Lys-661 is modified to N6-succinyllysine. 2 positions are modified to phosphoserine: Ser-668 and Ser-675. Mg(2+) is bound by residues Asp-717 and Asp-721. A helical membrane pass occupies residues Lys-773–Ile-792. Over Phe-793–Leu-802 the chain is Extracellular. The chain crosses the membrane as a helical span at residues Gly-803–Ala-823. Over Tyr-824 to Lys-843 the chain is Cytoplasmic. Residues Leu-844–Phe-866 form a helical membrane-spanning segment. Residues Phe-867–Cys-918 lie on the Extracellular side of the membrane. The chain crosses the membrane as a helical span at residues His-919 to Lys-938. Topologically, residues Thr-939–Asn-951 are cytoplasmic. Phosphoserine; by PKA is present on Ser-943. Residues Lys-952–Tyr-970 form a helical membrane-spanning segment. Residues Cys-971–Pro-985 lie on the Extracellular side of the membrane. A helical transmembrane segment spans residues Thr-986–Lys-1006. Over Leu-1007–Tyr-1023 the chain is Cytoplasmic.

It belongs to the cation transport ATPase (P-type) (TC 3.A.3) family. Type IIC subfamily. As to quaternary structure, the sodium/potassium-transporting ATPase is composed of a catalytic alpha subunit, an auxiliary non-catalytic beta subunit and an additional regulatory subunit. Interacts with regulatory subunit FXYD1. Interacts with regulatory subunit FXYD3. Interacts with SLC35G1 and STIM1. Interacts with SIK1. Interacts with CLN3; this interaction regulates the sodium/potassium-transporting ATPase complex localization at the plasma membrane. Interacts with SCN7A; activates ATP1A1 P-type sodium:potassium-exchanging transporter activity which indirectly signals to nearby neurons to regulate sodium homeostasis. In terms of processing, phosphorylation on Tyr-10 modulates pumping activity. Phosphorylation of Ser-943 by PKA modulates the response of ATP1A1 to PKC. Dephosphorylation by protein phosphatase 2A (PP2A) following increases in intracellular sodium, leading to increase catalytic activity. In terms of tissue distribution, expressed in the central nervous system, in most motor and sensory axons of the ventral and dorsal roots, as well as in the large motor neurons of the ventral horn (at protein level).

The protein resides in the cell membrane. The protein localises to the basolateral cell membrane. It localises to the sarcolemma. Its subcellular location is the cell projection. It is found in the axon. The protein resides in the melanosome. The catalysed reaction is K(+)(out) + Na(+)(in) + ATP + H2O = K(+)(in) + Na(+)(out) + ADP + phosphate + H(+). Functionally, this is the catalytic component of the active enzyme, which catalyzes the hydrolysis of ATP coupled with the exchange of sodium and potassium ions across the plasma membrane. This action creates the electrochemical gradient of sodium and potassium ions, providing the energy for active transport of various nutrients. Could also be part of an osmosensory signaling pathway that senses body-fluid sodium levels and controls salt intake behavior as well as voluntary water intake to regulate sodium homeostasis. In Rattus norvegicus (Rat), this protein is Sodium/potassium-transporting ATPase subunit alpha-1 (Atp1a1).